Reading from the N-terminus, the 179-residue chain is Adenine phosphoribosyltransferase (179 aa).

The protein belongs to the purine/pyrimidine phosphoribosyltransferase family. In terms of assembly, homodimer.

It localises to the cytoplasm. It carries out the reaction AMP + diphosphate = 5-phospho-alpha-D-ribose 1-diphosphate + adenine. The protein operates within purine metabolism; AMP biosynthesis via salvage pathway; AMP from adenine: step 1/1. Functionally, catalyzes a salvage reaction resulting in the formation of AMP, that is energically less costly than de novo synthesis. The polypeptide is Adenine phosphoribosyltransferase (Helicobacter pylori (strain HPAG1)).